A 353-amino-acid chain; its full sequence is Inactive metacaspase-4 (353 aa).

Glycine 2 carries the N-myristoyl glycine lipid modification.

Belongs to the peptidase C14B family. Palmitoylated. Post-translationally, proteolytic cleavage by MCA3 occurs prior or during secretion and requires MCA4 membrane localization. Cleavage is dispensable for secretion and parasite growth and virulence in the mammalian host. In vitro, can be cleaved by MCA2 but specifically cleaved by MCA3 in vivo.

It is found in the cell projection. The protein localises to the cilium. The protein resides in the flagellum membrane. It localises to the secreted. Its function is as follows. Inactive metacaspase which plays a role in parasite bloodstream form growth and in parasite virulence within the mammalian host. The chain is Inactive metacaspase-4 from Trypanosoma brucei brucei.